Consider the following 640-residue polypeptide: 1-deoxy-D-xylulose-5-phosphate synthase (640 aa).

Residues His-75 and 117–119 (GHA) contribute to the thiamine diphosphate site. Residue Asp-146 coordinates Mg(2+). Thiamine diphosphate contacts are provided by residues 147 to 148 (AA), Asn-175, and Glu-370. Residue Asn-175 coordinates Mg(2+).

Belongs to the transketolase family. DXPS subfamily. In terms of assembly, homodimer. Mg(2+) serves as cofactor. Thiamine diphosphate is required as a cofactor.

The catalysed reaction is D-glyceraldehyde 3-phosphate + pyruvate + H(+) = 1-deoxy-D-xylulose 5-phosphate + CO2. Its pathway is metabolic intermediate biosynthesis; 1-deoxy-D-xylulose 5-phosphate biosynthesis; 1-deoxy-D-xylulose 5-phosphate from D-glyceraldehyde 3-phosphate and pyruvate: step 1/1. In terms of biological role, catalyzes the acyloin condensation reaction between C atoms 2 and 3 of pyruvate and glyceraldehyde 3-phosphate to yield 1-deoxy-D-xylulose-5-phosphate (DXP). This chain is 1-deoxy-D-xylulose-5-phosphate synthase, found in Chlamydia trachomatis serovar D (strain ATCC VR-885 / DSM 19411 / UW-3/Cx).